A 378-amino-acid chain; its full sequence is Chaperone protein DnaJ (378 aa).

Residues 5–70 (DYYEVLSVSR…DKKAAYDQFG (66 aa)) form the J domain. The CR-type zinc finger occupies 133–211 (GLTKELRIPT…CHGEGRVEKS (79 aa)). Cys146, Cys149, Cys163, Cys166, Cys185, Cys188, Cys199, and Cys202 together coordinate Zn(2+). 4 CXXCXGXG motif repeats span residues 146–153 (CDSCDGSG), 163–170 (CGTCHGQG), 185–192 (CPTCHGRG), and 199–206 (CNKCHGEG).

The protein belongs to the DnaJ family. In terms of assembly, homodimer. Zn(2+) is required as a cofactor.

It is found in the cytoplasm. In terms of biological role, participates actively in the response to hyperosmotic and heat shock by preventing the aggregation of stress-denatured proteins and by disaggregating proteins, also in an autonomous, DnaK-independent fashion. Unfolded proteins bind initially to DnaJ; upon interaction with the DnaJ-bound protein, DnaK hydrolyzes its bound ATP, resulting in the formation of a stable complex. GrpE releases ADP from DnaK; ATP binding to DnaK triggers the release of the substrate protein, thus completing the reaction cycle. Several rounds of ATP-dependent interactions between DnaJ, DnaK and GrpE are required for fully efficient folding. Also involved, together with DnaK and GrpE, in the DNA replication of plasmids through activation of initiation proteins. This chain is Chaperone protein DnaJ, found in Shewanella sediminis (strain HAW-EB3).